The following is a 165-amino-acid chain: 3-isopropylmalate dehydratase small subunit (165 aa).

It belongs to the LeuD family. LeuD type 2 subfamily. As to quaternary structure, heterodimer of LeuC and LeuD.

The enzyme catalyses (2R,3S)-3-isopropylmalate = (2S)-2-isopropylmalate. The protein operates within amino-acid biosynthesis; L-leucine biosynthesis; L-leucine from 3-methyl-2-oxobutanoate: step 2/4. Its function is as follows. Catalyzes the isomerization between 2-isopropylmalate and 3-isopropylmalate, via the formation of 2-isopropylmaleate. This chain is 3-isopropylmalate dehydratase small subunit, found in Saccharolobus islandicus (strain M.16.27) (Sulfolobus islandicus).